The primary structure comprises 313 residues: MSSSSSSSASSAAAAAFRPAVVQREQQVVEEKFPAAAAAMREMVLPPVAAAAADSEQEQLCYVHCHYCDTVLVVSVPSSSLFETVTVRCGHCSSLLTVNMRGLLLPTTAAAAPPPPPPPPPPPPPPAAHFPHSLNLAPANPPHHHSLLDEISTANSPTQLLLEQHGLGGLMASAASCRNNNSPAAAAAPPPPTSQGKAAAKEPSPRTNTAVINRPPEKRQRVPSAYNRFIKDEIQRIKAGNPDISHREAFSAAAKNWAHFPHIHFGLMPDHQGLKKTSLLPQDHQRKDGLLKEGLYAAAAAAAAAANMGVAPY.

A C4-type zinc finger spans residues 65 to 92 (CHYCDTVLVVSVPSSSLFETVTVRCGHC). Disordered stretches follow at residues 107 to 149 (TTAA…SLLD) and 180 to 221 (NNSP…KRQR). The segment covering 112–128 (APPPPPPPPPPPPPPAA) has biased composition (pro residues).

It belongs to the YABBY family. Expressed in shoot apex and young inflorescences.

It localises to the nucleus. The chain is Protein YABBY 3 (YAB3) from Oryza sativa subsp. japonica (Rice).